Consider the following 160-residue polypeptide: MVPKLFTSQICLLLLLGLSGVGGSLHAKPRQFTRAQWFAIQHVSLNPPQCTTAMRVINNYQRRCKDQNTFLRTTFANVVNVCGNPNITCPRNRTLHNCHRSRFQVPLLHCNLTNPGAQNISNCKYADRTERRFYVVACDNRDPRDSPRYPVVPVHLDTTI.

The signal sequence occupies residues 1–27 (MVPKLFTSQICLLLLLGLSGVGGSLHA). Residues 28–72 (KPRQFTRAQWFAIQHVSLNPPQCTTAMRVINNYQRRCKDQNTFLR) are required for nearly all of the bactericidal activities; partially involved in LPS-binding. Histidine 42 functions as the Proton acceptor in the catalytic mechanism. 4 cysteine pairs are disulfide-bonded: cysteine 50/cysteine 110, cysteine 64/cysteine 123, cysteine 82/cysteine 138, and cysteine 89/cysteine 98. Tyrosine 60 bears the 3'-nitrotyrosine mark. 65 to 69 (KDQNT) is a substrate binding site. N-linked (GlcNAc...) asparagine glycans are attached at residues asparagine 86, asparagine 92, asparagine 111, and asparagine 119. Histidine 155 (proton donor) is an active-site residue.

This sequence belongs to the pancreatic ribonuclease family. As to quaternary structure, interacts with bacterial lipopolysaccharide (LPS) and lipoteichoic acid (LTA). In vitro interacts with phospholipid bilayers.

Its subcellular location is the secreted. Cytotoxin and helminthotoxin with low-efficiency ribonuclease activity. Possesses a wide variety of biological activities. Exhibits antibacterial activity. In Pongo pygmaeus (Bornean orangutan), this protein is Eosinophil cationic protein (RNASE3).